The primary structure comprises 169 residues: Shikimate kinase (169 aa).

12 to 17 (GAGKST) provides a ligand contact to ATP. Residue Ser16 participates in Mg(2+) binding. Residues Asp34, Arg58, and Gly80 each contribute to the substrate site. Arg117 contacts ATP. Arg136 provides a ligand contact to substrate.

The protein belongs to the shikimate kinase family. Monomer. Requires Mg(2+) as cofactor.

The protein resides in the cytoplasm. The enzyme catalyses shikimate + ATP = 3-phosphoshikimate + ADP + H(+). It participates in metabolic intermediate biosynthesis; chorismate biosynthesis; chorismate from D-erythrose 4-phosphate and phosphoenolpyruvate: step 5/7. Catalyzes the specific phosphorylation of the 3-hydroxyl group of shikimic acid using ATP as a cosubstrate. The sequence is that of Shikimate kinase from Rhodococcus erythropolis (strain PR4 / NBRC 100887).